Reading from the N-terminus, the 159-residue chain is Protein E6 (159 aa).

Zinc fingers lie at residues 35-71 (CVYC…CGKC) and 108-144 (CYIC…CMQC).

This sequence belongs to the papillomaviridae E6 protein family. Forms homodimers. Interacts with ubiquitin-protein ligase UBE3A/E6-AP; this interaction stimulates UBE3A ubiquitin activity. Interacts with host TP53 and EP300; this interaction inhibits TP53 activity.

It localises to the host cytoplasm. It is found in the host nucleus. Plays a major role in the induction and maintenance of cellular transformation. E6 associates with host UBE3A/E6-AP ubiquitin-protein ligase and modulates its activity. Sequesters tumor suppressor TP53 in the host cytoplasm and modulates its activity by interacting with host EP300 that results in the reduction of TP53 acetylation and activation. In turn, apoptosis induced by DNA damage is inhibited. E6 also protects host keratinocytes from apoptosis by mediating the degradation of host BAK1. May also inhibit host immune response. This is Protein E6 from Homo sapiens (Human).